Consider the following 425-residue polypeptide: MNYSRFLTATSLARKTSPIRATVEIMSRAPKDIISLAPGSPNPKVFPFKSAVFTVENGSTIRFEGEMFQRALQYSSSYGIPELLSWLKQLQIKLHNPPTVNYSPNEGQMDLCITSGCQDGLCKVFEMLINPGDTVLVNEPLYSGALFAMKPLGCNFISVPSDDCGIIPEGLKKVLSQWKPEDSKDPTKRTPKFLYTIPNGNNPTGNSLTGDRKKEIYELARKYDFLIIEDDPYYFLQFTKPWEPTFLSMDVDGRVIRADSLSKVISSGLRVGFITGPKSLIQRIVLHTQISSLHPCTLSQLMISELLYQWGEEGFLAHVDRAIDFYKNQRDFILAAADKWLRGLAEWHVPKAGMFLWIKVNGISDAKKLIEEKAIEREILLVPGNSFFVDNSAPSSFFRASFSQVTPAQMDLVFQRLAQLIKDVS.

The N-terminal 29 residues, 1-29 (MNYSRFLTATSLARKTSPIRATVEIMSRA), are a transit peptide targeting the mitochondrion. Arg-20 serves as a coordination point for substrate. Ser-40 is modified (phosphoserine). The substrate site is built by Tyr-74 and Tyr-142. Residue Lys-172 is modified to N6-succinyllysine. N6-acetyllysine is present on Lys-179. A compositionally biased stretch (basic and acidic residues) spans 179 to 188 (KPEDSKDPTK). The disordered stretch occupies residues 179 to 208 (KPEDSKDPTKRTPKFLYTIPNGNNPTGNSL). A compositionally biased stretch (polar residues) spans 198–208 (PNGNNPTGNSL). Asn-202 serves as a coordination point for substrate. Residue Lys-263 is modified to N6-(pyridoxal phosphate)lysine; alternate. 2 positions are modified to N6-acetyllysine; alternate: Lys-263 and Lys-339. An N6-succinyllysine; alternate mark is found at Lys-263 and Lys-339. Lys-351 is modified (N6-acetyllysine). An N6-acetyllysine; alternate modification is found at Lys-367. Position 367 is an N6-succinyllysine; alternate (Lys-367). Arg-399 is a binding site for substrate. Lys-422 is modified (N6-acetyllysine).

The protein belongs to the class-I pyridoxal-phosphate-dependent aminotransferase family. As to quaternary structure, homodimer. The cofactor is pyridoxal 5'-phosphate. Post-translationally, the N-terminus is blocked.

Its subcellular location is the mitochondrion. The catalysed reaction is L-kynurenine + 2-oxoglutarate = kynurenate + L-glutamate + H2O. It carries out the reaction L-2-aminoadipate + 2-oxoglutarate = 2-oxoadipate + L-glutamate. It catalyses the reaction glycine + 2-oxoglutarate = glyoxylate + L-glutamate. The enzyme catalyses L-kynurenine + glyoxylate = kynurenate + glycine + H2O. The catalysed reaction is 3-hydroxy-L-kynurenine + glyoxylate = xanthurenate + glycine + H2O. It carries out the reaction 2-oxohexanoate + L-kynurenine = L-2-aminohexanoate + kynurenate + H2O. It catalyses the reaction 3-phenylpyruvate + L-kynurenine = kynurenate + L-phenylalanine + H2O. The enzyme catalyses 4-methylsulfanyl-2-oxobutanoate + L-kynurenine = kynurenate + L-methionine + H2O. The catalysed reaction is 2-oxo-3-sulfanylpropanoate + L-kynurenine = kynurenate + L-cysteine + H2O. It carries out the reaction indole-3-pyruvate + L-kynurenine = kynurenate + L-tryptophan + H2O. It catalyses the reaction 2-oxopentanoate + L-kynurenine = L-2-aminopentanoate + kynurenate + H2O. The enzyme catalyses 4-methyl-2-oxopentanoate + L-kynurenine = kynurenate + L-leucine + H2O. The catalysed reaction is glyoxylate + L-methionine = 4-methylsulfanyl-2-oxobutanoate + glycine. It carries out the reaction L-2-aminoadipate + glyoxylate = 2-oxoadipate + glycine. It catalyses the reaction L-tyrosine + glyoxylate = 3-(4-hydroxyphenyl)pyruvate + glycine. The enzyme catalyses glyoxylate + L-phenylalanine = 3-phenylpyruvate + glycine. The catalysed reaction is L-tryptophan + glyoxylate = indole-3-pyruvate + glycine. It carries out the reaction L-leucine + glyoxylate = 4-methyl-2-oxopentanoate + glycine. It catalyses the reaction 2-oxobutanoate + L-kynurenine = (2S)-2-aminobutanoate + kynurenate + H2O. The enzyme catalyses 2-oxoadipate + L-kynurenine = L-2-aminoadipate + kynurenate + H2O. The catalysed reaction is 2-oxoadipate + L-kynurenine = 4-(2-aminophenyl)-2,4-dioxobutanoate + L-2-aminoadipate. Its pathway is amino-acid degradation; L-lysine degradation via saccharopine pathway; glutaryl-CoA from L-lysine: step 4/6. Its function is as follows. Transaminase with broad substrate specificity. Has transaminase activity towards aminoadipate, kynurenine, methionine and glutamate. Shows activity also towards tryptophan, aspartate and hydroxykynurenine. Accepts a variety of oxo-acids as amino-group acceptors, with a preference for 2-oxoglutarate, 2-oxocaproic acid, phenylpyruvate and alpha-oxo-gamma-methiol butyric acid. Can also use glyoxylate as amino-group acceptor (in vitro). The chain is Kynurenine/alpha-aminoadipate aminotransferase, mitochondrial from Rattus norvegicus (Rat).